The chain runs to 370 residues: Probable G-protein coupled receptor 85 (370 aa).

Residues 1 to 25 (MANYSHAADNILQNLSPLTAFLKLT) are Extracellular-facing. A glycan (N-linked (GlcNAc...) asparagine) is linked at N3. The chain crosses the membrane as a helical span at residues 26–46 (SLGFIIGVSVVGNLLISILLA). The Cytoplasmic segment spans residues 47-57 (KDKTLHRAPYY). Residues 58-78 (FLLDLCCSDILRSAICFPFVF) traverse the membrane as a helical segment. Residues 79–96 (NSVKNGSTWTYGTLTCKV) lie on the Extracellular side of the membrane. An N-linked (GlcNAc...) asparagine glycan is attached at N83. C94 and C172 are joined by a disulfide. Residues 97-117 (IAFLGVLSCFHTAFMLFCISV) traverse the membrane as a helical segment. The Cytoplasmic portion of the chain corresponds to 118-137 (TRYLAIAHHRFYTKRLTFWT). A helical transmembrane segment spans residues 138–158 (CLAVICMVWTLSVAMAFPPVL). Residues 159 to 188 (DVGTYSFIREEDQCTFQHRSFRANDSLGFM) lie on the Extracellular side of the membrane. N182 carries an N-linked (GlcNAc...) asparagine glycan. A helical transmembrane segment spans residues 189–209 (LLLALILLATQLVYLKLIFFV). Residues 210–286 (HDRRKMKPVQ…FKMEKRISRM (77 aa)) lie on the Cytoplasmic side of the membrane. Residues 287–307 (FYIMTFLFLTLWGPYLVACYW) traverse the membrane as a helical segment. Over 308–313 (RVFARG) the chain is Extracellular. The helical transmembrane segment at 314–334 (PVVPGGFLTAAVWMSFAQAGI) threads the bilayer. Residues 335–370 (NPFVCIFSNRELRRCFSTTLLYCRKSRLPREPYCVI) lie on the Cytoplasmic side of the membrane.

The protein belongs to the G-protein coupled receptor 1 family. As to quaternary structure, interacts with DLG4 and DLG3.

The protein localises to the cell membrane. It localises to the endoplasmic reticulum. Its function is as follows. Orphan receptor. The chain is Probable G-protein coupled receptor 85 (GPR85) from Pongo abelii (Sumatran orangutan).